A 793-amino-acid polypeptide reads, in one-letter code: Transcription factor castor (793 aa).

A compositionally biased stretch (polar residues) spans 44–53 (NEDISSSTSV). 3 disordered regions span residues 44-101 (NEDI…NLIA), 199-259 (VTST…HTNA), and 272-296 (LEST…DSSY). Composition is skewed to low complexity over residues 54–68 (QQQQ…QQPQ), 81–98 (SSQN…PNSN), and 210–221 (ATPAPSAGATAG). Threonine 211 carries the post-translational modification Phosphothreonine. Serine 215 carries the phosphoserine modification. Over residues 233–242 (ESADDDEDDD) the composition is skewed to acidic residues. Residues 245 to 254 (LSSLTSCSSS) show a composition bias toward low complexity. Polar residues predominate over residues 273–284 (ESTTDSLDSPSM). Residues 377–402 (FHCHEEPCQGKILSKKDDIIRHLKWH) form a C2H2-type 1; atypical zinc finger. C2H2-type zinc fingers lie at residues 439 to 463 (YHCV…ANFH), 498 to 522 (YHCC…KTYH), and 556 to 580 (IHCV…KRKH). Positions 599–682 (EESSLDAMPQ…RLKVEDESSN (84 aa)) are disordered. A compositionally biased stretch (low complexity) spans 608–629 (QQQQQQQQQQPTSLSQSQSSSS). Residues 630–644 (VCGGSNTSTPLSSLS) are compositionally biased toward polar residues. A DNA-binding region (a.T hook) is located at residues 650 to 662 (ARKRGRPPKKIQL).

In terms of tissue distribution, expressed in a specific subset of neuroblasts in the ventral nerve cord and the procephalic region in the embryo. Expressed in many, if not all, late delaminating NBs, and in early NBs, but only after they have undergone several rounds of ganglion mother cell-producing divisions.

It is found in the nucleus. Transcription factor that specifies expression of key genes in developing central nervous system (CNS). Essential for many, if not all, late developing neuroblastoma (NB) sublineages. Binds to the 5'-[CG]C[CT][CT]AAAAA[AT]-3' DNA sequence, like hb, suggesting that cas and hb act as a late regulators in early and late CNS NB sublineage, respectively. Acts by repressing expression of nub/pdm-1 and pdm2/pdm-2 POU genes, and restrict their pattern of expression in appropriate cells. Required for a full expression of vvl/drifter and acj6/I-POU; it is however unknown whether it directly activates these genes. Controls engrailed (en) expression in the ventral nerve cord. The protein is Transcription factor castor (cas) of Drosophila melanogaster (Fruit fly).